Reading from the N-terminus, the 185-residue chain is MVDQAYEPRLKSEYRARIRAAMKEQFAYTNEMQIPKLDKIVLNMGIGEAVADSKKAQTALKDLMAIAGQKPVATKARKSIAGFKLREGMVVGAKVTLRKDKMYEFLDRLVTIALPRVKDFRGLNGKSFDGRGNYAMGLKEHLVFPEINYDQIEQIWGMDIIVCTTAKTDQEAKALLKEFQFPFTN.

The protein belongs to the universal ribosomal protein uL5 family. As to quaternary structure, part of the 50S ribosomal subunit; part of the 5S rRNA/L5/L18/L25 subcomplex. Contacts the 5S rRNA and the P site tRNA. Forms a bridge to the 30S subunit in the 70S ribosome.

Functionally, this is one of the proteins that bind and probably mediate the attachment of the 5S RNA into the large ribosomal subunit, where it forms part of the central protuberance. In the 70S ribosome it contacts protein S13 of the 30S subunit (bridge B1b), connecting the 2 subunits; this bridge is implicated in subunit movement. Contacts the P site tRNA; the 5S rRNA and some of its associated proteins might help stabilize positioning of ribosome-bound tRNAs. The protein is Large ribosomal subunit protein uL5 of Caulobacter sp. (strain K31).